The sequence spans 278 residues: 4-diphosphocytidyl-2-C-methyl-D-erythritol kinase (278 aa).

Lysine 9 is an active-site residue. 93-103 (PLGGGLGGGSS) serves as a coordination point for ATP. Aspartate 135 is a catalytic residue.

This sequence belongs to the GHMP kinase family. IspE subfamily.

It catalyses the reaction 4-CDP-2-C-methyl-D-erythritol + ATP = 4-CDP-2-C-methyl-D-erythritol 2-phosphate + ADP + H(+). The protein operates within isoprenoid biosynthesis; isopentenyl diphosphate biosynthesis via DXP pathway; isopentenyl diphosphate from 1-deoxy-D-xylulose 5-phosphate: step 3/6. In terms of biological role, catalyzes the phosphorylation of the position 2 hydroxy group of 4-diphosphocytidyl-2C-methyl-D-erythritol. The sequence is that of 4-diphosphocytidyl-2-C-methyl-D-erythritol kinase from Nitrosomonas eutropha (strain DSM 101675 / C91 / Nm57).